Consider the following 790-residue polypeptide: Nitrogen permease reactivator protein (790 aa).

The tract at residues 1-68 (MSSLTRLLQE…DRNRANVPVP (68 aa)) is disordered. A compositionally biased stretch (polar residues) spans 16 to 38 (TSNSSPRTSADTLTTTPESQSLD). Residues 46-58 (SSHIGSVSNSSSS) show a composition bias toward low complexity. Residue Ser-47 is modified to Phosphoserine; by autocatalysis. Phosphoserine occurs at positions 85, 90, 100, 111, 116, 125, 137, and 141. Positions 151–175 (RLSTTSHTSGRAIPSLSSSIPYSVP) are enriched in polar residues. Disordered regions lie at residues 151 to 188 (RLST…NSNS) and 234 to 258 (LQKA…SGSF). Positions 176 to 188 (NSNKDNNSSNSNS) are enriched in low complexity. Positions 238–248 (SMDSNNANATQ) are enriched in polar residues. Over residues 249-258 (SRSISRSGSF) the composition is skewed to low complexity. Ser-257 is subject to Phosphoserine; by autocatalysis. Phosphoserine occurs at positions 259, 260, 288, 292, 317, 320, and 328. A compositionally biased stretch (low complexity) spans 276 to 289 (NSNSAGMSFSANSN). The interval 276–357 (NSNSAGMSFS…QSVPRSQHSS (82 aa)) is disordered. 3 stretches are compositionally biased toward polar residues: residues 290 to 305 (GPSP…NGST), 314 to 339 (RQSS…SPSS), and 346 to 357 (PSQSVPRSQHSS). Phosphotyrosine is present on Tyr-334. 3 positions are modified to phosphoserine: Ser-336, Ser-353, and Ser-356. Ser-357 carries the phosphoserine; by autocatalysis modification. Ser-385 is modified (phosphoserine). One can recognise a Protein kinase domain in the interval 438-742 (IKTGADLGAG…IEEIMEDPWI (305 aa)). ATP-binding positions include 444-452 (LGAGAGGSV) and Lys-467. Asp-561 serves as the catalytic Proton acceptor. Disordered regions lie at residues 666-704 (LVTR…NIGP) and 766-790 (HHTQ…QNNQ). The segment covering 677-688 (DESHSTEKKKPE) has biased composition (basic and acidic residues). Residues 689–701 (SSSNNVSDPNNVN) show a composition bias toward low complexity.

Belongs to the protein kinase superfamily. Ser/Thr protein kinase family. Interacts with TIP41. Hyperphosphorylated in nitrogen-rich growth medium. Nitrogen limitation (or rapamycin treatment) leads to substantial, though not complete dephosphorylation. Autophosphorylation plays only a minor role and seems not to be regulated by the quality of the nitrogen source.

It localises to the cytoplasm. The catalysed reaction is L-seryl-[protein] + ATP = O-phospho-L-seryl-[protein] + ADP + H(+). It carries out the reaction L-threonyl-[protein] + ATP = O-phospho-L-threonyl-[protein] + ADP + H(+). Its activity is regulated as follows. Dephosphorylation by SIT4 activates NPR1 kinase activity. Functionally, nutrient-regulated protein kinase that promotes the activity of at least 6 distinct transport systems for nitrogenous nutrients under conditions of nitrogen catabolite derepression. Under poor nitrogen growth conditions, required for post-Golgi sorting of the general amino acid permease GAP1 and the three known ammonia permeases, MEP1/2/3, to the plasma membrane. Also contributes to the stability and the retention of GAP1 at the plasma membrane. Inversely, promotes the degradation of tryptophan permease TAT2 under the same conditions. Activity is regulated by the TOR signaling pathway via phosphatase SIT4. Although thought to be involved in regulation of GLN3-dependent transcription by nitrogen catabolite repression, this seems to be an indirect effect from the reduced uptake of the nitrogen-repressing compound. In Saccharomyces cerevisiae (strain ATCC 204508 / S288c) (Baker's yeast), this protein is Nitrogen permease reactivator protein (NPR1).